Reading from the N-terminus, the 125-residue chain is Ribosome-binding factor A (125 aa).

This sequence belongs to the RbfA family. In terms of assembly, monomer. Binds 30S ribosomal subunits, but not 50S ribosomal subunits or 70S ribosomes.

It is found in the cytoplasm. Its function is as follows. One of several proteins that assist in the late maturation steps of the functional core of the 30S ribosomal subunit. Associates with free 30S ribosomal subunits (but not with 30S subunits that are part of 70S ribosomes or polysomes). Required for efficient processing of 16S rRNA. May interact with the 5'-terminal helix region of 16S rRNA. This chain is Ribosome-binding factor A, found in Wigglesworthia glossinidia brevipalpis.